Here is a 185-residue protein sequence, read N- to C-terminus: Putative 3-methyladenine DNA glycosylase (185 aa).

This sequence belongs to the DNA glycosylase MPG family.

This is Putative 3-methyladenine DNA glycosylase from Rhizobium meliloti (strain 1021) (Ensifer meliloti).